Consider the following 772-residue polypeptide: TBC domain-containing protein C4G8.04 (772 aa).

A compositionally biased stretch (polar residues) spans 143 to 161 (SFFPSSQEPSIPENPSSLT). 2 disordered regions span residues 143–163 (SFFP…LTGE) and 275–294 (KFFR…TFVS). Residues 275–291 (KFFRSSPRCSTPSVSST) are compositionally biased toward low complexity. T395 is modified (phosphothreonine). The 190-residue stretch at 504–693 (GVPLCYKAKV…RIFDMLFCDG (190 aa)) folds into the Rab-GAP TBC domain.

The sequence is that of TBC domain-containing protein C4G8.04 from Schizosaccharomyces pombe (strain 972 / ATCC 24843) (Fission yeast).